Consider the following 248-residue polypeptide: Myelin protein P0 (248 aa).

The first 28 residues, 1–28 (MAPGAPSSSPSPILAALLFSSLVLSPVQ), serve as a signal peptide directing secretion. The Extracellular segment spans residues 29–155 (AIVVYTDKEV…VFEKVPTRYG (127 aa)). The region spanning 30–143 (IVVYTDKEVH…DIVGKTSQVT (114 aa)) is the Ig-like V-type domain. Cys50 and Cys127 are joined by a disulfide. Residue Asn122 is glycosylated (N-linked (GlcNAc...) (complex) asparagine). Residues 156–176 (VVLGAVIGGVLGVVLLALLLF) traverse the membrane as a helical segment. Residues 177–248 (YLIRYCWLRR…GLGESRKDKK (72 aa)) lie on the Cytoplasmic side of the membrane. A Phosphoserine; by PKC modification is found at Ser210. Positions 224–248 (DHSRSTKAASEKKTKGLGESRKDKK) are disordered. Phosphoserine occurs at positions 226 and 228. 2 positions are modified to phosphoserine; by PKC: Ser233 and Ser243.

Belongs to the myelin P0 protein family. As to quaternary structure, homodimer and homotetramer. N-glycosylated; contains sulfate-substituted glycan. As to expression, found only in peripheral nervous system Schwann cells.

It is found in the cell membrane. Functionally, is an adhesion molecule necessary for normal myelination in the peripheral nervous system. It mediates adhesion between adjacent myelin wraps and ultimately drives myelin compaction. In Bos taurus (Bovine), this protein is Myelin protein P0 (MPZ).